Consider the following 259-residue polypeptide: UPF0014 membrane protein slr1647 (259 aa).

7 helical membrane passes run 4–24 (ALIE…GAAI), 34–54 (LTGQ…VVGY), 55–75 (FLAV…LAIM), 98–118 (LWLS…VVII), 128–148 (YLIP…SLAG), 195–215 (MMVV…LAGG), and 225–245 (ILIM…VTAT).

The protein belongs to the UPF0014 family.

Its subcellular location is the cell membrane. The polypeptide is UPF0014 membrane protein slr1647 (Synechocystis sp. (strain ATCC 27184 / PCC 6803 / Kazusa)).